The sequence spans 352 residues: Putative KilA-N domain-containing protein 006L (352 aa).

Positions 15–123 (TFYKGLFGDF…DKCNNIIINY (109 aa)) constitute a KilA-N domain. The stretch at 129–236 (KTMDKKTLQS…KIDNIQNKLE (108 aa)) forms a coiled coil.

It belongs to the IIV-6 006L/238R/313L/468L family.

In Acheta domesticus (House cricket), this protein is Putative KilA-N domain-containing protein 006L.